A 602-amino-acid chain; its full sequence is DNA mismatch repair protein MutL (602 aa).

It belongs to the DNA mismatch repair MutL/HexB family.

In terms of biological role, this protein is involved in the repair of mismatches in DNA. It is required for dam-dependent methyl-directed DNA mismatch repair. May act as a 'molecular matchmaker', a protein that promotes the formation of a stable complex between two or more DNA-binding proteins in an ATP-dependent manner without itself being part of a final effector complex. In Baumannia cicadellinicola subsp. Homalodisca coagulata, this protein is DNA mismatch repair protein MutL.